The following is a 276-amino-acid chain: F420-dependent methylenetetrahydromethanopterin dehydrogenase (276 aa).

This sequence belongs to the MTD family.

The enzyme catalyses 5,10-methylenetetrahydromethanopterin + oxidized coenzyme F420-(gamma-L-Glu)(n) + 2 H(+) = 5,10-methenyl-5,6,7,8-tetrahydromethanopterin + reduced coenzyme F420-(gamma-L-Glu)(n). In terms of biological role, catalyzes the oxidation of methylene-H(4)MPT to methenyl-H(4)MPT(+). The protein is F420-dependent methylenetetrahydromethanopterin dehydrogenase of Methanosphaera stadtmanae (strain ATCC 43021 / DSM 3091 / JCM 11832 / MCB-3).